The following is a 381-amino-acid chain: Homoserine O-succinyltransferase (381 aa).

The region spanning 45–360 (NAVLVCHALN…PHGHDAFLLD (316 aa)) is the AB hydrolase-1 domain. The Nucleophile role is filled by Ser151. A substrate-binding site is contributed by Arg221. Catalysis depends on residues Asp321 and His354. Position 355 (Asp355) interacts with substrate.

This sequence belongs to the AB hydrolase superfamily. MetX family. As to quaternary structure, homodimer.

Its subcellular location is the cytoplasm. The catalysed reaction is L-homoserine + succinyl-CoA = O-succinyl-L-homoserine + CoA. It functions in the pathway amino-acid biosynthesis; L-methionine biosynthesis via de novo pathway; O-succinyl-L-homoserine from L-homoserine: step 1/1. In terms of biological role, transfers a succinyl group from succinyl-CoA to L-homoserine, forming succinyl-L-homoserine. The chain is Homoserine O-succinyltransferase from Burkholderia multivorans (strain ATCC 17616 / 249).